The sequence spans 336 residues: UPF0324 membrane protein SP_0034 (336 aa).

Transmembrane regions (helical) follow at residues 65 to 84 (LLQY…QVFA), 91 to 113 (PVIL…FFAL), 118 to 140 (ATLV…APVI), 153 to 175 (VIFF…LHLS), 211 to 233 (SATI…LSYW), 249 to 271 (VFPL…TSLG), 286 to 305 (FLIV…VAMV), and 312 to 334 (ILLG…TLIG).

It belongs to the UPF0324 family.

It localises to the cell membrane. The protein is UPF0324 membrane protein SP_0034 of Streptococcus pneumoniae serotype 4 (strain ATCC BAA-334 / TIGR4).